The primary structure comprises 132 residues: Cytochrome B5 isoform C (132 aa).

The Cytochrome b5 heme-binding domain occupies 2 to 78 (ANLISFHDVA…MKKYCIGDVD (77 aa)). Heme contacts are provided by H37 and H61. A helical transmembrane segment spans residues 110–129 (LLIYLIPLLILGVAFALRFY).

This sequence belongs to the cytochrome b5 family. Interacts with CER1, BI-1, FAH1 and FAH2.

The protein resides in the endoplasmic reticulum membrane. Functionally, membrane bound hemoprotein which function as an electron carrier for several membrane bound oxygenases, including fatty acid desaturases. This is Cytochrome B5 isoform C from Arabidopsis thaliana (Mouse-ear cress).